A 383-amino-acid polypeptide reads, in one-letter code: Na(+)/H(+) antiporter NhaA (383 aa).

11 helical membrane passes run 19-39, 56-76, 92-112, 122-142, 151-171, 174-194, 212-232, 255-275, 292-312, 326-346, and 356-376; these read AGGV…NSPL, VLHG…GLEI, ILPG…FLAL, GWAV…ALLG, IFLT…IALF, AKLS…LAAL, LWGA…ALAL, VGYG…FAGL, LLFG…WLGF, GVAV…ALAF, and VKVG…LVLL.

The protein belongs to the NhaA Na(+)/H(+) (TC 2.A.33) antiporter family.

Its subcellular location is the cell inner membrane. The catalysed reaction is Na(+)(in) + 2 H(+)(out) = Na(+)(out) + 2 H(+)(in). In terms of biological role, na(+)/H(+) antiporter that extrudes sodium in exchange for external protons. This is Na(+)/H(+) antiporter NhaA from Paramagnetospirillum magneticum (strain ATCC 700264 / AMB-1) (Magnetospirillum magneticum).